The following is a 251-amino-acid chain: DNA-directed RNA polymerase III subunit RPC7 (251 aa).

The disordered stretch occupies residues 186 to 251 (DDASTGDGAA…EEDPNEEAAF (66 aa)). Ser189 is subject to Phosphoserine. 2 stretches are compositionally biased toward acidic residues: residues 203-225 (GEDD…DDDY) and 234-251 (GDDD…EAAF).

Belongs to the eukaryotic RPC7 RNA polymerase subunit family. Component of the RNA polymerase III (Pol III) complex consisting of 17 subunits.

It is found in the nucleus. DNA-dependent RNA polymerase catalyzes the transcription of DNA into RNA using the four ribonucleoside triphosphates as substrates. Specific peripheric component of RNA polymerase III which synthesizes small RNAs, such as 5S rRNA and tRNAs. C31 is involved in the formation of the initiation complex. This chain is DNA-directed RNA polymerase III subunit RPC7 (RPC31), found in Saccharomyces cerevisiae (strain ATCC 204508 / S288c) (Baker's yeast).